The primary structure comprises 292 residues: Coatomer subunit epsilon (292 aa).

It belongs to the COPE family. As to quaternary structure, oligomeric complex that consists of at least the alpha, beta, beta', gamma, delta, epsilon and zeta subunits.

The protein localises to the cytoplasm. Its subcellular location is the golgi apparatus membrane. It localises to the cytoplasmic vesicle. It is found in the COPI-coated vesicle membrane. The coatomer is a cytosolic protein complex that binds to dilysine motifs and reversibly associates with Golgi non-clathrin-coated vesicles, which further mediate biosynthetic protein transport from the ER, via the Golgi up to the trans Golgi network. The coatomer complex is required for budding from Golgi membranes, and is essential for the retrograde Golgi-to-ER transport of dilysine-tagged proteins. This chain is Coatomer subunit epsilon (cope-1), found in Caenorhabditis elegans.